We begin with the raw amino-acid sequence, 380 residues long: Gibberellin 20 oxidase 3 (380 aa).

A Fe2OG dioxygenase domain is found at 221 to 321; that stretch reads DSDSIFRLNY…RKTFAFFLCP (101 aa). Fe cation-binding residues include His-246, Asp-248, and His-302. The active site involves Arg-312.

Belongs to the iron/ascorbate-dependent oxidoreductase family. GA20OX subfamily. Fe(2+) is required as a cofactor. L-ascorbate serves as cofactor. In terms of tissue distribution, expressed at high level in developing siliques. Detected in seeds, roots, leaves and inflorescences. In seeds, specifically detected at the outer layer of the outer integument.

It catalyses the reaction gibberellin A12 + 2 2-oxoglutarate + 3 O2 + H(+) = gibberellin A9 + 2 succinate + 3 CO2 + 2 H2O. The enzyme catalyses gibberellin A12 + 3 2-oxoglutarate + 3 O2 = gibberellin A25 + 3 succinate + 3 CO2 + H2O + H(+). It carries out the reaction gibberellin A53 + 2 2-oxoglutarate + 3 O2 + H(+) = gibberellin A20 + 2 succinate + 3 CO2 + 2 H2O. The protein operates within plant hormone biosynthesis; gibberellin biosynthesis. In terms of biological role, key oxidase enzyme in the biosynthesis of gibberellin that catalyzes the conversion of GA12 and GA53 to GA9 and GA20 respectively, via a three-step oxidation at C-20 of the GA skeleton, and GA25 is also formed as a minor product. GA53 is less effectively oxidized than GA12. In Arabidopsis thaliana (Mouse-ear cress), this protein is Gibberellin 20 oxidase 3 (GA20OX3).